A 302-amino-acid polypeptide reads, in one-letter code: Recombination-associated protein RdgC (302 aa).

It belongs to the RdgC family.

The protein resides in the cytoplasm. It is found in the nucleoid. May be involved in recombination. This Actinobacillus succinogenes (strain ATCC 55618 / DSM 22257 / CCUG 43843 / 130Z) protein is Recombination-associated protein RdgC.